We begin with the raw amino-acid sequence, 1311 residues long: Cyclin-G-associated kinase (1311 aa).

The residue at position 2 (Ser2) is an N-acetylserine. Phosphoserine occurs at positions 2 and 16. A Protein kinase domain is found at 40-314 (LRVRRVLAEG…SIAEVVHQLQ (275 aa)). Asp173 acts as the Proton acceptor in catalysis. Residues 399–566 (SVANYAKGDL…EYMCDMVAEE (168 aa)) form the Phosphatase tensin-type domain. Ser456 carries the post-translational modification Phosphoserine. The region spanning 572–710 (SKPILVRAVV…FQVNLEVEVE (139 aa)) is the C2 tensin-type domain. 2 disordered regions span residues 709 to 729 (VEPR…SMRG) and 749 to 788 (FGKP…SADA). Ser770 is subject to Phosphoserine. The span at 770–788 (SPEAEPTDSDSPPSSSADA) shows a compositional bias: low complexity. Residue Thr776 is modified to Phosphothreonine. Position 783 is a phosphoserine (Ser783). Position 794 is a phosphothreonine (Thr794). Disordered regions lie at residues 801 to 860 (KEAE…VQQD), 913 to 1035 (CLLG…DLLG), and 1047 to 1150 (AVAP…PNYA). Residues Ser811, Ser826, Ser829, Ser834, and Ser939 each carry the phosphoserine modification. Composition is skewed to low complexity over residues 925–939 (PPED…LLAS) and 950–966 (PRGG…PLLP). Polar residues-rich tracts occupy residues 967–976 (SSGNNSQPCS) and 1070–1080 (SQASWTKSQNP). Ser1096 bears the Phosphoserine mark. Positions 1109 to 1124 (TATTPKGSSSWQTSRP) are enriched in polar residues. Arg1123 is subject to Omega-N-methylarginine. A phosphoserine mark is found at Ser1176 and Ser1185. The 65-residue stretch at 1247–1311 (SRWTPVGMAD…FENQGSRPLF (65 aa)) folds into the J domain.

The protein belongs to the protein kinase superfamily. Ser/Thr protein kinase family. Ubiquitous. Highest in testis.

It localises to the cytoplasm. The protein localises to the perinuclear region. It is found in the golgi apparatus. Its subcellular location is the trans-Golgi network. The protein resides in the cell junction. It localises to the focal adhesion. The protein localises to the cytoplasmic vesicle. It is found in the clathrin-coated vesicle. The enzyme catalyses L-seryl-[protein] + ATP = O-phospho-L-seryl-[protein] + ADP + H(+). It carries out the reaction L-threonyl-[protein] + ATP = O-phospho-L-threonyl-[protein] + ADP + H(+). Functionally, associates with cyclin G and CDK5. Seems to act as an auxilin homolog that is involved in the uncoating of clathrin-coated vesicles by Hsc70 in non-neuronal cells. Expression oscillates slightly during the cell cycle, peaking at G1. May play a role in clathrin-mediated endocytosis and intracellular trafficking, and in the dynamics of clathrin assembly/disassembly. The chain is Cyclin-G-associated kinase from Homo sapiens (Human).